We begin with the raw amino-acid sequence, 591 residues long: Transcription factor COE1 (591 aa).

Methionine 1 is subject to N-acetylmethionine. The span at 1–14 (MFGIQESIQRSGSS) shows a compositional bias: polar residues. The tract at residues 1–21 (MFGIQESIQRSGSSMKEEPLG) is disordered. A Glycyl lysine isopeptide (Lys-Gly) (interchain with G-Cter in SUMO1); alternate cross-link involves residue lysine 16. A Glycyl lysine isopeptide (Lys-Gly) (interchain with G-Cter in SUMO2); alternate cross-link involves residue lysine 16. The interval 63 to 66 (RKSN) is interaction with DNA. The C5-type zinc-finger motif lies at 151-170 (CRVLLTHEIMCSRCCDKKSC). Interaction with DNA stretches follow at residues 197-204 (NCLKNAGN) and 236-239 (NNSK). An IPT/TIG domain is found at 262–345 (PCIKAISPSE…KGTPGRFIYT (84 aa)). Residues 457–480 (GFTRNSSSVSPHGYVPSTTPQQTN) are disordered.

Belongs to the COE family. Homodimer. Interacts with ZNF423 and ZNF521, leading to prevent EBF1 to bind DNA and activate target genes. Interacts with CCR4-NOT component CNOT3. As to quaternary structure, (Microbial infection) Interacts with Epstein-barr virus protein EBNA2.

The protein localises to the nucleus. Key pioneer transcription factor of B-cell specification and commitment. Recognizes variations of the palindromic sequence 5'-ATTCCCNNGGGAATT-3'. Operates in a transcription factor network to activate B-cell-specific genes and repress genes associated with alternative cell fates. For instance, positively regulates many B-cell specific genes including BCR or CD40 while repressing genes that direct cells into alternative lineages, including GATA3 and TCF7 for the T-cell lineage. In addition to its role during lymphopoiesis, controls the thermogenic gene program in adipocytes during development and in response to environmental cold. Its function is as follows. (Microbial infection) Acts as a chromatin anchor for Epstein-Barr virus EBNA2 to mediate the assembly of EBNA2 chromatin complexes in B-cells. In addition, binds to the viral LMP1 proximal promoter and promotes its expression during latency. The sequence is that of Transcription factor COE1 (EBF1) from Homo sapiens (Human).